The chain runs to 109 residues: Large ribosomal subunit protein uL22 (109 aa).

The protein belongs to the universal ribosomal protein uL22 family. In terms of assembly, part of the 50S ribosomal subunit.

In terms of biological role, this protein binds specifically to 23S rRNA; its binding is stimulated by other ribosomal proteins, e.g. L4, L17, and L20. It is important during the early stages of 50S assembly. It makes multiple contacts with different domains of the 23S rRNA in the assembled 50S subunit and ribosome. Functionally, the globular domain of the protein is located near the polypeptide exit tunnel on the outside of the subunit, while an extended beta-hairpin is found that lines the wall of the exit tunnel in the center of the 70S ribosome. The protein is Large ribosomal subunit protein uL22 of Blochmanniella pennsylvanica (strain BPEN).